A 375-amino-acid polypeptide reads, in one-letter code: Probable peptidoglycan glycosyltransferase FtsW (375 aa).

Over 1–16 (MNLNFKLNLKEIERYD) the chain is Cytoplasmic. A helical membrane pass occupies residues 17-37 (LVILLMAVALTCFGVVMVYSA). Topologically, residues 38–49 (SSVMATKKFHDG) are periplasmic. Residues 50–70 (FYFLKRQGIYAILGCAAMIVA) traverse the membrane as a helical segment. Over 71–81 (MRIDYRQWREY) the chain is Cytoplasmic. A helical membrane pass occupies residues 82 to 102 (AVPILLGCLLLLLLVFIPGIG). The Periplasmic portion of the chain corresponds to 103 to 145 (GAAKGASRWIRFPGFNLQPSELAKIALIMYMAYSLDKKQEKVK). A helical transmembrane segment spans residues 146–166 (FFSTGFAPYMVLLAILLAILL). The Cytoplasmic segment spans residues 167-169 (KQH). Residues 170-190 (DLGSALTMGGVAILMLFAAGT) form a helical membrane-spanning segment. At 191–193 (RPR) the chain is on the periplasmic side. The helical transmembrane segment at 194-214 (YILGMVVLTLPFLYFLVMNVD) threads the bilayer. Residues 215–233 (YRRRRILAYLNPWEDPTNT) are Cytoplasmic-facing. A helical transmembrane segment spans residues 234–254 (GFQIIQSWLAFGNGGIIGQGL). The Periplasmic segment spans residues 255 to 279 (GEGKQKMFFLPEAHTDFILSVVGEE). The helical transmembrane segment at 280–300 (LGLIGVIVIAAMFLMLVLRGV) threads the bilayer. Residues 301–312 (RVALMAQDPFGR) lie on the Cytoplasmic side of the membrane. A helical membrane pass occupies residues 313 to 333 (FLAFGIVTLLGIQAFVNMGVV). Residues 334–343 (TGLLPTKGLA) lie on the Periplasmic side of the membrane. Residues 344–364 (LPFISYGGSSLIVTLFAVGIL) traverse the membrane as a helical segment. Over 365–375 (LNVSTRMKGTP) the chain is Cytoplasmic.

Belongs to the SEDS family. FtsW subfamily.

The protein resides in the cell inner membrane. It carries out the reaction [GlcNAc-(1-&gt;4)-Mur2Ac(oyl-L-Ala-gamma-D-Glu-L-Lys-D-Ala-D-Ala)](n)-di-trans,octa-cis-undecaprenyl diphosphate + beta-D-GlcNAc-(1-&gt;4)-Mur2Ac(oyl-L-Ala-gamma-D-Glu-L-Lys-D-Ala-D-Ala)-di-trans,octa-cis-undecaprenyl diphosphate = [GlcNAc-(1-&gt;4)-Mur2Ac(oyl-L-Ala-gamma-D-Glu-L-Lys-D-Ala-D-Ala)](n+1)-di-trans,octa-cis-undecaprenyl diphosphate + di-trans,octa-cis-undecaprenyl diphosphate + H(+). It participates in cell wall biogenesis; peptidoglycan biosynthesis. In terms of biological role, peptidoglycan polymerase that is essential for cell division. The sequence is that of Probable peptidoglycan glycosyltransferase FtsW from Geobacter metallireducens (strain ATCC 53774 / DSM 7210 / GS-15).